The following is a 242-amino-acid chain: Orotidine 5'-phosphate decarboxylase (242 aa).

Residues D16, K37, D64 to T73, T128, R190, Q199, G219, and R220 each bind substrate. K66 (proton donor) is an active-site residue.

This sequence belongs to the OMP decarboxylase family. Type 1 subfamily. Homodimer.

It carries out the reaction orotidine 5'-phosphate + H(+) = UMP + CO2. The protein operates within pyrimidine metabolism; UMP biosynthesis via de novo pathway; UMP from orotate: step 2/2. In terms of biological role, catalyzes the decarboxylation of orotidine 5'-monophosphate (OMP) to uridine 5'-monophosphate (UMP). The chain is Orotidine 5'-phosphate decarboxylase from Prochlorococcus marinus (strain AS9601).